We begin with the raw amino-acid sequence, 314 residues long: Oxidoreductase NAD-binding domain-containing protein 1 (314 aa).

Residues 1-18 form the signal peptide; it reads MALVAGSAAYQVLRGVTG. Residues 63–166 enclose the FAD-binding FR-type domain; sequence EIISPAKVCE…VGGEFCFDPQ (104 aa). 180–185 contacts NAD(+); it reads GVGINP.

In Xenopus tropicalis (Western clawed frog), this protein is Oxidoreductase NAD-binding domain-containing protein 1 (oxnad1).